The primary structure comprises 390 residues: S-adenosylmethionine synthase 1 (390 aa).

Mg(2+) is bound at residue Glu-9. His-15 lines the ATP pocket. Glu-43 contacts K(+). 2 residues coordinate L-methionine: Glu-56 and Gln-99. ATP is bound by residues 167–169, 235–238, Asp-246, 252–253, Ala-269, Lys-273, and Lys-277; these read DGK, SGRF, and RK. Asp-246 is a binding site for L-methionine. Position 277 (Lys-277) interacts with L-methionine.

It belongs to the AdoMet synthase family. As to quaternary structure, homotetramer. Mn(2+) serves as cofactor. The cofactor is Mg(2+). Co(2+) is required as a cofactor. It depends on K(+) as a cofactor.

It localises to the cytoplasm. It catalyses the reaction L-methionine + ATP + H2O = S-adenosyl-L-methionine + phosphate + diphosphate. The protein operates within amino-acid biosynthesis; S-adenosyl-L-methionine biosynthesis; S-adenosyl-L-methionine from L-methionine: step 1/1. Catalyzes the formation of S-adenosylmethionine from methionine and ATP. The reaction comprises two steps that are both catalyzed by the same enzyme: formation of S-adenosylmethionine (AdoMet) and triphosphate, and subsequent hydrolysis of the triphosphate. The chain is S-adenosylmethionine synthase 1 (SAM1) from Petunia hybrida (Petunia).